The sequence spans 455 residues: UDP-N-acetylmuramoylalanine--D-glutamate ligase (455 aa).

Position 119-125 (119-125) interacts with ATP; the sequence is GTNGKTT.

The protein belongs to the MurCDEF family.

It localises to the cytoplasm. It catalyses the reaction UDP-N-acetyl-alpha-D-muramoyl-L-alanine + D-glutamate + ATP = UDP-N-acetyl-alpha-D-muramoyl-L-alanyl-D-glutamate + ADP + phosphate + H(+). It participates in cell wall biogenesis; peptidoglycan biosynthesis. Cell wall formation. Catalyzes the addition of glutamate to the nucleotide precursor UDP-N-acetylmuramoyl-L-alanine (UMA). In Listeria innocua serovar 6a (strain ATCC BAA-680 / CLIP 11262), this protein is UDP-N-acetylmuramoylalanine--D-glutamate ligase.